A 296-amino-acid polypeptide reads, in one-letter code: Undecaprenyl-diphosphatase (296 aa).

The next 7 membrane-spanning stretches (helical) occupy residues 48–68 (SAFT…AWVF), 104–124 (LTLW…LLFD), 131–151 (LFSV…MIFA), 167–187 (ITFF…WPGF), 208–228 (SDFT…LSLV), 237–257 (SHIP…LLSI), and 272–292 (FAIY…GFGI).

Belongs to the UppP family.

It localises to the cell membrane. It catalyses the reaction di-trans,octa-cis-undecaprenyl diphosphate + H2O = di-trans,octa-cis-undecaprenyl phosphate + phosphate + H(+). Catalyzes the dephosphorylation of undecaprenyl diphosphate (UPP). Confers resistance to bacitracin. This chain is Undecaprenyl-diphosphatase, found in Staphylococcus carnosus (strain TM300).